The sequence spans 431 residues: Tyrosine--tRNA ligase (431 aa).

Tyr-34 serves as a coordination point for L-tyrosine. Positions 39 to 48 (PTADSLHIGH) match the 'HIGH' region motif. L-tyrosine contacts are provided by Tyr-171 and Gln-175. The 'KMSKS' region signature appears at 231 to 235 (KFGKT). Lys-234 lines the ATP pocket. The S4 RNA-binding domain occupies 353-422 (INVVEALVKT…GKYTILRRGK (70 aa)).

This sequence belongs to the class-I aminoacyl-tRNA synthetase family. TyrS type 1 subfamily. As to quaternary structure, homodimer.

It localises to the cytoplasm. The catalysed reaction is tRNA(Tyr) + L-tyrosine + ATP = L-tyrosyl-tRNA(Tyr) + AMP + diphosphate + H(+). Catalyzes the attachment of tyrosine to tRNA(Tyr) in a two-step reaction: tyrosine is first activated by ATP to form Tyr-AMP and then transferred to the acceptor end of tRNA(Tyr). The polypeptide is Tyrosine--tRNA ligase (Neisseria meningitidis serogroup C / serotype 2a (strain ATCC 700532 / DSM 15464 / FAM18)).